A 460-amino-acid chain; its full sequence is MTVTAPNALNFECETGNYHTFCPISCVAWLYQKIEDSFFLVIGTKTCGYFLQNAMGVMIFAEPRYAMAELEEGDISAQLNDYEELKRLCLEIKRDRNPSVIVWIGTCTTEIIKMDLEGLAPKLEAEIGIPIVVARANGLDYAFTQGEDTVLAAMAARCPTSTAISDPEERNPIQRLLNFGKKKEEVQAQSSQYHPHPPLVLFGSLPDPVVTQLTLELKKQGIKVSGWLPAKRYTELPVIDEGYYVAGVNPFLSRTATTLIRRRKCQLITAPFPIGPDGTRTWIEQICATFGIQPQGLAEREAETWQKLSDYLELVRGKSVFFMGDNLLEISLARFLIRCGMRVLEIGIPYMDKRYQAAELALLSQTCAEMGHPLPTIVEKPDNYNQLQRIKALQPDLVITGMAHANPLEARGISTKWSVEFTFAQIHGFGNARDILELVTRPLRRNQALAGLGWQKLVAH.

The [4Fe-4S] cluster site is built by Cys22, Cys47, and Cys107.

This sequence belongs to the BchN/ChlN family. As to quaternary structure, protochlorophyllide reductase is composed of three subunits; ChlL, ChlN and ChlB. Forms a heterotetramer of two ChlB and two ChlN subunits. The cofactor is [4Fe-4S] cluster.

The enzyme catalyses chlorophyllide a + oxidized 2[4Fe-4S]-[ferredoxin] + 2 ADP + 2 phosphate = protochlorophyllide a + reduced 2[4Fe-4S]-[ferredoxin] + 2 ATP + 2 H2O. Its pathway is porphyrin-containing compound metabolism; chlorophyll biosynthesis (light-independent). In terms of biological role, component of the dark-operative protochlorophyllide reductase (DPOR) that uses Mg-ATP and reduced ferredoxin to reduce ring D of protochlorophyllide (Pchlide) to form chlorophyllide a (Chlide). This reaction is light-independent. The NB-protein (ChlN-ChlB) is the catalytic component of the complex. The sequence is that of Light-independent protochlorophyllide reductase subunit N from Thermosynechococcus vestitus (strain NIES-2133 / IAM M-273 / BP-1).